The following is a 196-amino-acid chain: Lipoprotein signal peptidase (196 aa).

A run of 3 helical transmembrane segments spans residues 43 to 63, 75 to 95, and 100 to 120; these read LMLK…GISF, AVFI…MVCS, and GFAG…DRLF. Catalysis depends on residues Asp126 and Asp144. A helical membrane pass occupies residues 135 to 155; that stretch reads YSFPVFNLADCFITIGVIILI.

The protein belongs to the peptidase A8 family.

Its subcellular location is the cell inner membrane. It catalyses the reaction Release of signal peptides from bacterial membrane prolipoproteins. Hydrolyzes -Xaa-Yaa-Zaa-|-(S,diacylglyceryl)Cys-, in which Xaa is hydrophobic (preferably Leu), and Yaa (Ala or Ser) and Zaa (Gly or Ala) have small, neutral side chains.. Its pathway is protein modification; lipoprotein biosynthesis (signal peptide cleavage). Functionally, this protein specifically catalyzes the removal of signal peptides from prolipoproteins. The polypeptide is Lipoprotein signal peptidase (Rickettsia canadensis (strain McKiel)).